A 516-amino-acid chain; its full sequence is L-amino-acid oxidase (516 aa).

Residues 1 to 18 (MNVFFMFSLLFLAALGSC) form the signal peptide. Cysteines 28 and 189 form a disulfide. FAD contacts are provided by residues 61–62 (MA), 81–82 (EA), Arg89, and 103–106 (GPMR). 2 residues coordinate substrate: Arg106 and His239. Position 279 (Val279) interacts with FAD. Cys349 and Cys430 are joined by a disulfide. A glycan (N-linked (GlcNAc...) asparagine) is linked at Asn379. Position 390 (Tyr390) interacts with substrate. FAD-binding positions include Glu475 and 482-487 (GWIDST). 482–483 (GW) contacts substrate.

It belongs to the flavin monoamine oxidase family. FIG1 subfamily. As to quaternary structure, homodimer; non-covalently linked. FAD serves as cofactor. In terms of tissue distribution, expressed by the venom gland.

It is found in the secreted. The enzyme catalyses an L-alpha-amino acid + O2 + H2O = a 2-oxocarboxylate + H2O2 + NH4(+). Catalyzes an oxidative deamination of predominantly hydrophobic and aromatic L-amino acids, thus producing hydrogen peroxide that may contribute to the diverse toxic effects of this enzyme. Exhibits diverse biological activities, such as hemolysis, edema, hemorrhage, apoptosis, antibacterial and antiparasitic activities, as well as regulation of platelet aggregation. Effects of snake L-amino oxidases on platelets are controversial, since they either induce aggregation or inhibit agonist-induced aggregation. These different effects are probably due to different experimental conditions. The polypeptide is L-amino-acid oxidase (Crotalus adamanteus (Eastern diamondback rattlesnake)).